The following is an 872-amino-acid chain: DNA polymerase 1 (872 aa).

The protein belongs to the DNA polymerase type-B family.

The catalysed reaction is DNA(n) + a 2'-deoxyribonucleoside 5'-triphosphate = DNA(n+1) + diphosphate. This is DNA polymerase 1 (pol-alpha) from Sulfurisphaera ohwakuensis.